The following is an 810-amino-acid chain: Phenylalanine--tRNA ligase beta subunit (810 aa).

In terms of domain architecture, tRNA-binding spans 39–151; it reads RTWAAGVVVG…AGLQAGQPVG (113 aa). Residues 408-494 form the B5 domain; sequence EPEHSITLRL…RLYGYDNFGE (87 aa). 4 residues coordinate Mg(2+): Asp-472, Asp-478, Glu-481, and Glu-482. The region spanning 716–809 is the FDX-ACB domain; the sequence is SSFPASDRDL…LVERFRVTLR (94 aa).

The protein belongs to the phenylalanyl-tRNA synthetase beta subunit family. Type 1 subfamily. Tetramer of two alpha and two beta subunits. Mg(2+) is required as a cofactor.

Its subcellular location is the cytoplasm. It catalyses the reaction tRNA(Phe) + L-phenylalanine + ATP = L-phenylalanyl-tRNA(Phe) + AMP + diphosphate + H(+). This Synechococcus elongatus (strain ATCC 33912 / PCC 7942 / FACHB-805) (Anacystis nidulans R2) protein is Phenylalanine--tRNA ligase beta subunit (pheT).